A 231-amino-acid polypeptide reads, in one-letter code: Sugar fermentation stimulation protein homolog (231 aa).

It belongs to the SfsA family.

The sequence is that of Sugar fermentation stimulation protein homolog from Pyrobaculum islandicum (strain DSM 4184 / JCM 9189 / GEO3).